Reading from the N-terminus, the 153-residue chain is MNYTYDPAEVQYIVRIHNTNIDGTKRIPFALTKIRGIGIRIATAICKRLGIDLRKRAGEMGEDEMKRISDAILDPASVGIPESYMNHQRDIIDGTTSHLIGTRLDADLRMMIERGKKNKRIRAYRLDVGLKVRGQRTKSNGRRGRSMGVSRKK.

The disordered stretch occupies residues 134 to 153; the sequence is GQRTKSNGRRGRSMGVSRKK.

It belongs to the universal ribosomal protein uS13 family.

The protein localises to the cytoplasm. Its function is as follows. Located at the top of the head of the 40S subunit, it contacts several helices of the 18S rRNA. The polypeptide is Small ribosomal subunit protein uS13 (RPS18) (Encephalitozoon cuniculi (strain GB-M1) (Microsporidian parasite)).